We begin with the raw amino-acid sequence, 147 residues long: Hemoglobin subunit epsilon-M (147 aa).

Positions 3–147 (HFTPEDKTNI…VSSALGHKYH (145 aa)) constitute a Globin domain. Residues S14 and S51 each carry the phosphoserine modification. The heme b site is built by H64 and H93.

The protein belongs to the globin family. In terms of tissue distribution, red blood cells.

Its function is as follows. Hemoglobin epsilon chain is a beta-type chain found in early embryos. This chain is Hemoglobin subunit epsilon-M (HBE1), found in Didelphis virginiana (North American opossum).